The sequence spans 579 residues: Arginine--tRNA ligase (579 aa).

Residues 123–133 carry the 'HIGH' region motif; the sequence is PNLAKEMHVGH.

This sequence belongs to the class-I aminoacyl-tRNA synthetase family. Monomer.

Its subcellular location is the cytoplasm. The catalysed reaction is tRNA(Arg) + L-arginine + ATP = L-arginyl-tRNA(Arg) + AMP + diphosphate. The sequence is that of Arginine--tRNA ligase from Cellvibrio japonicus (strain Ueda107) (Pseudomonas fluorescens subsp. cellulosa).